We begin with the raw amino-acid sequence, 111 residues long: PCNA-associated factor (111 aa).

At Ser-8 the chain carries Phosphoserine. Lys-15 participates in a covalent cross-link: Glycyl lysine isopeptide (Lys-Gly) (interchain with G-Cter in ubiquitin). Positions 23-34 (RKVLGSSTSATN) match the D-box motif. The segment at 23 to 111 (RKVLGSSTSA…QPDHTNDEKE (89 aa)) is disordered. Residue Lys-24 is modified to N6-acetyllysine; alternate. Residue Lys-24 forms a Glycyl lysine isopeptide (Lys-Gly) (interchain with G-Cter in ubiquitin); alternate linkage. Phosphoserine occurs at positions 28, 31, and 72. The span at 28–40 (SSTSATNSTSVSS) shows a compositional bias: low complexity. Residues 62 to 72 (QKGIGEFFRLS) carry the PIP-box motif. Residues 72-81 (SPKDSEKENQ) show a composition bias toward basic and acidic residues. Positions 78–80 (KEN) match the KEN box motif. Residues 85–97 (EAGSSGLGKAKRK) carry the Initiation motif motif.

As to quaternary structure, interacts (when monoubiquitinated at Lys-15 and Lys-24) with PCNA. Interacts with isoform 2/p33ING1b of ING1. Interacts with BRCA1. Monoubiquitinated at Lys-15 and Lys-24 during normal S phase, promoting its association with PCNA. Also diubiquitinated at these 2 sites. Following DNA damage, monoubiquitin chains at Lys-15 and Lys-24 are probably extended, leading to disrupt the interaction with PCNA. Polyubiquitinated by the APC/C complex at the mitotic exit, leading to its degradation by the proteasome. In terms of tissue distribution, expressed predominantly in liver, pancreas and placenta. Not detected in heart or brain. Highly expressed in a number of tumors, especially esophageal tumors, in anaplastic thyroid carcinomas, adrenocortical carcinomas, and in non-small-cell lung cancer lines.

The protein localises to the nucleus. It localises to the cytoplasm. Its subcellular location is the perinuclear region. Its function is as follows. PCNA-binding protein that acts as a regulator of DNA repair during DNA replication. Following DNA damage, the interaction with PCNA is disrupted, facilitating the interaction between monoubiquitinated PCNA and the translesion DNA synthesis DNA polymerase eta (POLH) at stalled replisomes, facilitating the bypass of replication-fork-blocking lesions. Also acts as a regulator of centrosome number. In Homo sapiens (Human), this protein is PCNA-associated factor.